A 247-amino-acid polypeptide reads, in one-letter code: Neurotrophic factor BDNF precursor form (247 aa).

The N-terminal stretch at 1–18 (MTILFLTMVISYFGCMKA) is a signal peptide. A propeptide spanning residues 19 to 128 (APMKEANVRG…AANMSMRVRR (110 aa)) is cleaved from the precursor. Asparagine 121 carries N-linked (GlcNAc...) asparagine glycosylation. Disulfide bonds link cysteine 141–cysteine 208, cysteine 186–cysteine 237, and cysteine 196–cysteine 239.

This sequence belongs to the NGF-beta family. Monomers and homodimers. Binds to NTRK2/TRKB. Can form heterodimers with other neurotrophin family members, such as NTF3 and NTF4 (in vitro), but the physiological relevance of this is not clear. BDNF precursor form: interacts with the heterodimer formed by NGFR and SORCS2. Mature BDNF has much lower affinity for the heterodimer formed by NGFR and SORCS2. N-glycosylated and glycosulfated, contrary to mature BDNF. Post-translationally, mature BDNF is produced by proteolytic removal of the propeptide, catalyzed by a FURIN family member. In addition, the precursor form is proteolytically cleaved within the propeptide, but this is not an obligatory intermediate for the production of mature BDNF. Can be converted into mature BDNF by plasmin (PLG).

The protein resides in the secreted. In terms of biological role, important signaling molecule that activates signaling cascades downstream of NTRK2. During development, promotes the survival and differentiation of selected neuronal populations of the peripheral and central nervous systems. Participates in axonal growth, pathfinding and in the modulation of dendritic growth and morphology. Major regulator of synaptic transmission and plasticity at adult synapses in many regions of the CNS. The versatility of BDNF is emphasized by its contribution to a range of adaptive neuronal responses including long-term potentiation (LTP), long-term depression (LTD), certain forms of short-term synaptic plasticity, as well as homeostatic regulation of intrinsic neuronal excitability. Functionally, important signaling molecule that activates signaling cascades downstream of NTRK2. Activates signaling cascades via the heterodimeric receptor formed by NGFR and SORCS2. Signaling via NGFR and SORCS2 plays a role in synaptic plasticity and long-term depression (LTD). Binding to NGFR and SORCS2 promotes neuronal apoptosis. Promotes neuronal growth cone collapse. The polypeptide is Neurotrophic factor BDNF precursor form (BDNF) (Ailurus fulgens (Himalayan red panda)).